Reading from the N-terminus, the 348-residue chain is Histidinol-phosphate aminotransferase (348 aa).

Lysine 207 carries the N6-(pyridoxal phosphate)lysine modification.

It belongs to the class-II pyridoxal-phosphate-dependent aminotransferase family. Histidinol-phosphate aminotransferase subfamily. Homodimer. It depends on pyridoxal 5'-phosphate as a cofactor.

It carries out the reaction L-histidinol phosphate + 2-oxoglutarate = 3-(imidazol-4-yl)-2-oxopropyl phosphate + L-glutamate. It participates in amino-acid biosynthesis; L-histidine biosynthesis; L-histidine from 5-phospho-alpha-D-ribose 1-diphosphate: step 7/9. The sequence is that of Histidinol-phosphate aminotransferase from Rippkaea orientalis (strain PCC 8801 / RF-1) (Cyanothece sp. (strain PCC 8801)).